A 231-amino-acid polypeptide reads, in one-letter code: Phosphoglycolate phosphatase, plasmid (231 aa).

The Nucleophile role is filled by Asp-14. Mg(2+)-binding residues include Asp-14, Asp-16, and Asp-175.

Belongs to the HAD-like hydrolase superfamily. CbbY/CbbZ/Gph/YieH family. In terms of assembly, homotrimer. Requires Mg(2+) as cofactor.

It catalyses the reaction 2-phosphoglycolate + H2O = glycolate + phosphate. It functions in the pathway organic acid metabolism; glycolate biosynthesis; glycolate from 2-phosphoglycolate: step 1/1. Specifically catalyzes the dephosphorylation of 2-phosphoglycolate. Is involved in the dissimilation of the intracellular 2-phosphoglycolate formed during the DNA repair of 3'-phosphoglycolate ends, a major class of DNA lesions induced by oxidative stress. The sequence is that of Phosphoglycolate phosphatase, plasmid (cbbZP) from Cupriavidus necator (strain ATCC 17699 / DSM 428 / KCTC 22496 / NCIMB 10442 / H16 / Stanier 337) (Ralstonia eutropha).